Reading from the N-terminus, the 189-residue chain is MTHAPHSEVAQHVAEAAADHADSGVFPPFDPTYFASQLFWLTIAFVILYIALDRLILPKIKTTIEDRRDRIADDLDAAAQAKADAEAAGEAYEKSLAEARNKAHALAAKTRQTLDAEIAKETAAVEAELSAKQEASEAAIRKAKDKAFAEVRGIAATATAAVVSALAGVEVSEADAGKTVDGLIKAKEA.

A helical transmembrane segment spans residues 32–52 (TYFASQLFWLTIAFVILYIAL).

The protein belongs to the ATPase B chain family. As to quaternary structure, F-type ATPases have 2 components, F(1) - the catalytic core - and F(0) - the membrane proton channel. F(1) has five subunits: alpha(3), beta(3), gamma(1), delta(1), epsilon(1). F(0) has three main subunits: a(1), b(2) and c(10-14). The alpha and beta chains form an alternating ring which encloses part of the gamma chain. F(1) is attached to F(0) by a central stalk formed by the gamma and epsilon chains, while a peripheral stalk is formed by the delta and b chains.

It localises to the cell inner membrane. Functionally, f(1)F(0) ATP synthase produces ATP from ADP in the presence of a proton or sodium gradient. F-type ATPases consist of two structural domains, F(1) containing the extramembraneous catalytic core and F(0) containing the membrane proton channel, linked together by a central stalk and a peripheral stalk. During catalysis, ATP synthesis in the catalytic domain of F(1) is coupled via a rotary mechanism of the central stalk subunits to proton translocation. Component of the F(0) channel, it forms part of the peripheral stalk, linking F(1) to F(0). The protein is ATP synthase subunit b 1 of Maricaulis maris (strain MCS10) (Caulobacter maris).